We begin with the raw amino-acid sequence, 211 residues long: Protein-L-isoaspartate O-methyltransferase (211 aa).

S62 is an active-site residue.

Belongs to the methyltransferase superfamily. L-isoaspartyl/D-aspartyl protein methyltransferase family.

It is found in the cytoplasm. It catalyses the reaction [protein]-L-isoaspartate + S-adenosyl-L-methionine = [protein]-L-isoaspartate alpha-methyl ester + S-adenosyl-L-homocysteine. Catalyzes the methyl esterification of L-isoaspartyl residues in peptides and proteins that result from spontaneous decomposition of normal L-aspartyl and L-asparaginyl residues. It plays a role in the repair and/or degradation of damaged proteins. This chain is Protein-L-isoaspartate O-methyltransferase, found in Shewanella sp. (strain ANA-3).